The primary structure comprises 432 residues: Proteinase-activated receptor 1 (432 aa).

The first 21 residues, 1 to 21 (MGPRRLLLVAVGLSLCGPLLS), serve as a signal peptide directing secretion. Residues 22–45 (SRVPMRQPESERMYATPYATPNPR) constitute a propeptide, removed for receptor activation. Topologically, residues 46-109 (SFFLRNPSED…SGYLTSPWLT (64 aa)) are extracellular. Residues Asn-69 and Asn-82 are each glycosylated (N-linked (GlcNAc...) asparagine). A helical transmembrane segment spans residues 110 to 135 (LFIPSVYTFVFIVSLPLNILAIAVFV). The Cytoplasmic segment spans residues 136-144 (FRMKVKKPA). The helical transmembrane segment at 145–164 (VVYMLHLAMADVLFVSVLPF) threads the bilayer. Topologically, residues 165 to 183 (KISYYFSGTDWQFGSGMCR) are extracellular. Cys-182 and Cys-261 are oxidised to a cystine. A helical membrane pass occupies residues 184–205 (FATAACYCNMYASIMLMTVISI). Residues 206-225 (DRFLAVVYPIQSLSWRTLGR) lie on the Cytoplasmic side of the membrane. The helical transmembrane segment at 226-246 (ANFTCVVIWVMAIMGVVPLLL) threads the bilayer. The Extracellular portion of the chain corresponds to 247–275 (KEQTTQVPGLNITTCHDVLNETLLHGFYS). Residues Asn-257 and Asn-266 are each glycosylated (N-linked (GlcNAc...) asparagine). A helical membrane pass occupies residues 276-295 (YYFSAFSAIFFLVPLIISTV). The Cytoplasmic segment spans residues 296 to 318 (CYTSIIRCLSSSAVANRSKKSRA). Residues 319–341 (LFLSAAVFCIFIVCFGPTNVLLI) form a helical membrane-spanning segment. Residues 342–357 (VHYLLLSDSPGTETAY) lie on the Extracellular side of the membrane. The helical transmembrane segment at 358-381 (FAYLLCVCVTSVASCIDPLIYYYA) threads the bilayer. The Cytoplasmic portion of the chain corresponds to 382–432 (SSECQKHLYSILCCRESSDSNSCNSTGQLMPSKMDTCSSHLNNSIYKKLLA). The residue at position 425 (Ser-425) is a Phosphoserine.

It belongs to the G-protein coupled receptor 1 family. In terms of processing, proteolytic cleavage by thrombin generates a new N-terminus that functions as a tethered ligand. Also proteolytically cleaved by cathepsin CTSG. Post-translationally, phosphorylated in the C-terminal tail; probably mediating desensitization prior to the uncoupling and internalization of the receptor. Expressed in primary cultured oligodendrocytes.

Its subcellular location is the cell membrane. In terms of biological role, high affinity receptor that binds the activated thrombin, leading to calcium release from intracellular stores. The thrombin-activated receptor signaling pathway is mediated through PTX-insensitive G proteins, activation of phospholipase C resulting in the production of 1D-myo-inositol 1,4,5-trisphosphate (InsP3) which binds to InsP3 receptors causing calcium release from the stores. In astrocytes, the calcium released into the cytosol allows the Ca(2+)-dependent release of L-glutamate into the synaptic cleft through BEST1, that targets the neuronal postsynaptic GRIN2A/NMDAR receptor resulting in the synaptic plasticity regulation. May play a role in platelets activation and in vascular development. Mediates up-regulation of pro-inflammatory cytokines, such as MCP-1/CCL2 and IL6, triggered by coagulation factor Xa (F10) in cardiac fibroblasts and umbilical vein endothelial cells. This chain is Proteinase-activated receptor 1, found in Rattus norvegicus (Rat).